Here is a 400-residue protein sequence, read N- to C-terminus: Enoyl-[acyl-carrier-protein] reductase [NADH] (400 aa).

Residues 48–53 (GSSSGY), 74–75 (FE), 111–112 (DA), and 139–140 (LA) contribute to the NAD(+) site. Y225 provides a ligand contact to substrate. Y235 (proton donor) is an active-site residue. Residues K244 and 273–275 (VVT) contribute to the NAD(+) site.

Belongs to the TER reductase family. In terms of assembly, monomer.

The enzyme catalyses a 2,3-saturated acyl-[ACP] + NAD(+) = a (2E)-enoyl-[ACP] + NADH + H(+). The protein operates within lipid metabolism; fatty acid biosynthesis. In terms of biological role, involved in the final reduction of the elongation cycle of fatty acid synthesis (FAS II). Catalyzes the reduction of a carbon-carbon double bond in an enoyl moiety that is covalently linked to an acyl carrier protein (ACP). The polypeptide is Enoyl-[acyl-carrier-protein] reductase [NADH] (Shewanella frigidimarina (strain NCIMB 400)).